Here is a 233-residue protein sequence, read N- to C-terminus: Lipoprotein-releasing system ATP-binding protein LolD (233 aa).

Residues 10 to 233 (YRLEGVGKEY…AGELYDQHRP (224 aa)) form the ABC transporter domain. 46 to 53 (GASGSGKS) is an ATP binding site.

This sequence belongs to the ABC transporter superfamily. Lipoprotein translocase (TC 3.A.1.125) family. The complex is composed of two ATP-binding proteins (LolD) and two transmembrane proteins (LolC and LolE).

Its subcellular location is the cell inner membrane. In terms of biological role, part of the ABC transporter complex LolCDE involved in the translocation of mature outer membrane-directed lipoproteins, from the inner membrane to the periplasmic chaperone, LolA. Responsible for the formation of the LolA-lipoprotein complex in an ATP-dependent manner. In Nitratidesulfovibrio vulgaris (strain ATCC 29579 / DSM 644 / CCUG 34227 / NCIMB 8303 / VKM B-1760 / Hildenborough) (Desulfovibrio vulgaris), this protein is Lipoprotein-releasing system ATP-binding protein LolD.